The following is a 502-amino-acid chain: Mannitol 2-dehydrogenase (502 aa).

37 to 48 serves as a coordination point for NAD(+); that stretch reads IVHIGVGGFHRA.

This sequence belongs to the mannitol dehydrogenase family. Monomer.

The catalysed reaction is D-mannitol + NAD(+) = D-fructose + NADH + H(+). Its function is as follows. Catalyzes the NAD(H)-dependent interconversion of D-fructose and D-mannitol in the mannitol metabolic pathway. The protein is Mannitol 2-dehydrogenase of Neosartorya fischeri (strain ATCC 1020 / DSM 3700 / CBS 544.65 / FGSC A1164 / JCM 1740 / NRRL 181 / WB 181) (Aspergillus fischerianus).